The sequence spans 222 residues: Prolactin-3B1 (222 aa).

The signal sequence occupies residues M1 to S31. 2 disulfides stabilise this stretch: C82-C197 and C214-C222.

It belongs to the somatotropin/prolactin family.

It localises to the secreted. The protein is Prolactin-3B1 (Prl3b1) of Mus musculus (Mouse).